The sequence spans 153 residues: MTREDATAEILAARLARGLSWQQLAEAIDRPLVWTISALLGQHPVPVESAEILVELLGLDQSAVPVLAAVPMRGGLPTAVPTDPTIYRFYEVLQVYGGAIKELIHEEFGDGIMSAINFSVDVERKPHPDGDRVVVTFDGKFLPYAWTAADGRR.

Catalysis depends on residues arginine 88, glutamate 91, and serine 114.

The protein belongs to the cyanase family.

It carries out the reaction cyanate + hydrogencarbonate + 3 H(+) = NH4(+) + 2 CO2. Functionally, catalyzes the reaction of cyanate with bicarbonate to produce ammonia and carbon dioxide. In Mycolicibacterium vanbaalenii (strain DSM 7251 / JCM 13017 / BCRC 16820 / KCTC 9966 / NRRL B-24157 / PYR-1) (Mycobacterium vanbaalenii), this protein is Cyanate hydratase.